Reading from the N-terminus, the 122-residue chain is Ribonuclease pancreatic (122 aa).

Residues 1–16 (ETPAEKFQRQHMDTEH) are compositionally biased toward basic and acidic residues. Residues 1 to 20 (ETPAEKFQRQHMDTEHSTAS) are disordered. Residues lysine 6 and arginine 9 each contribute to the substrate site. Histidine 11 serves as the catalytic Proton acceptor. Intrachain disulfides connect cysteine 25/cysteine 83, cysteine 39/cysteine 94, cysteine 57/cysteine 109, and cysteine 64/cysteine 71. Substrate is bound by residues 40 to 44 (KPLNT), lysine 65, and arginine 84. The active-site Proton donor is histidine 117.

This sequence belongs to the pancreatic ribonuclease family. Monomer. Interacts with and forms tight 1:1 complexes with RNH1. Dimerization of two such complexes may occur. Interaction with RNH1 inhibits this protein. In terms of processing, not glycosylated although the sequence N-V-T, a recognition site for carbohydrate attachment, is present. Pancreas.

It is found in the secreted. The enzyme catalyses an [RNA] containing cytidine + H2O = an [RNA]-3'-cytidine-3'-phosphate + a 5'-hydroxy-ribonucleotide-3'-[RNA].. It carries out the reaction an [RNA] containing uridine + H2O = an [RNA]-3'-uridine-3'-phosphate + a 5'-hydroxy-ribonucleotide-3'-[RNA].. Its function is as follows. Endonuclease that catalyzes the cleavage of RNA on the 3' side of pyrimidine nucleotides. Acts on single-stranded and double-stranded RNA. This is Ribonuclease pancreatic (RNASE1) from Osphranter rufus (Red kangaroo).